Reading from the N-terminus, the 82-residue chain is Exodeoxyribonuclease 7 small subunit (82 aa).

This sequence belongs to the XseB family. As to quaternary structure, heterooligomer composed of large and small subunits.

The protein resides in the cytoplasm. The enzyme catalyses Exonucleolytic cleavage in either 5'- to 3'- or 3'- to 5'-direction to yield nucleoside 5'-phosphates.. Bidirectionally degrades single-stranded DNA into large acid-insoluble oligonucleotides, which are then degraded further into small acid-soluble oligonucleotides. The sequence is that of Exodeoxyribonuclease 7 small subunit from Mycobacterium avium (strain 104).